Here is a 1148-residue protein sequence, read N- to C-terminus: Small G protein signaling modulator 1 (1148 aa).

An RUN domain is found at 36–190 (HEDSSHIISF…EYTKMKTADH (155 aa)). The segment at 256 to 297 (LLYGKNNVLVQPRDDMEAVPGYLSLHQTADVMTLKWTPNQLM) is important for interaction with RAB9A and RAB9B. Residues 301–350 (VGDLDYEKSVYWDYAMTIRLEEIVYLHCHQQVDSGGTVVLVSQDGIQRPP) are required for interaction with RAP family members. 3 disordered regions span residues 377–411 (DPPLWSQRGKGKVFPKLRKRSPQGSAESTSSDKDD), 700–830 (DSTI…PREE), and 871–894 (GWRSSETEKHGQADSEDNLSEEPE). Positions 385–397 (GKGKVFPKLRKRS) are enriched in basic residues. In terms of domain architecture, Rab-GAP TBC spans 617–1081 (GIQPEIRKAV…LVWETIWAAK (465 aa)). Residues 702–716 (TISNESSQSCSSGRQ) show a composition bias toward polar residues. Residues 742-751 (AEGRLEEKQP) show a composition bias toward basic and acidic residues. Polar residues predominate over residues 757–802 (NLVNGTCSPDSGHPSSHNFSSGLSEHSEPSLSTEDSVLDAQRNTPT). 2 stretches are compositionally biased toward basic and acidic residues: residues 805-816 (RPRDGSVDDRQS) and 871-883 (GWRSSETEKHGQA). The span at 884 to 894 (DSEDNLSEEPE) shows a compositional bias: acidic residues.

The protein belongs to the RUTBC family. As to quaternary structure, interacts with RAB9A (GTP-bound form) and RAB9B (GTP-bound form); has much lower affinity for GDP-bound RAB9A and RAB9B. Interacts with RAB3A, RAB4A, RAB5A, RAB8A, RAB11A, RAP1A, RAP1B, RAP2A and RAP2B. No interaction with RAB27A. As to expression, mainly expressed in brain, heart and testis.

It is found in the golgi apparatus. The protein resides in the trans-Golgi network. The protein localises to the cytoplasmic vesicle membrane. It localises to the cytoplasm. Interacts with numerous Rab family members, functioning as Rab effector for some, and as GTPase activator for others. Promotes GTP hydrolysis by RAB34 and RAB36. Probably functions as a GTPase effector with RAB9A and RAB9B; does not stimulate GTP hydrolysis with RAB9A and RAB9B. This is Small G protein signaling modulator 1 (SGSM1) from Homo sapiens (Human).